The primary structure comprises 234 residues: Orotate phosphoribosyltransferase (234 aa).

Lys-30 is a 5-phospho-alpha-D-ribose 1-diphosphate binding site. Orotate is bound at residue 38 to 39 (FF). 5-phospho-alpha-D-ribose 1-diphosphate contacts are provided by residues 76–77 (YK), Arg-103, Lys-104, Lys-107, His-109, and 128–136 (DDVITAGTA). Residues Thr-132 and Arg-160 each contribute to the orotate site.

This sequence belongs to the purine/pyrimidine phosphoribosyltransferase family. PyrE subfamily. In terms of assembly, homodimer. It depends on Mg(2+) as a cofactor.

It catalyses the reaction orotidine 5'-phosphate + diphosphate = orotate + 5-phospho-alpha-D-ribose 1-diphosphate. Its pathway is pyrimidine metabolism; UMP biosynthesis via de novo pathway; UMP from orotate: step 1/2. Catalyzes the transfer of a ribosyl phosphate group from 5-phosphoribose 1-diphosphate to orotate, leading to the formation of orotidine monophosphate (OMP). The polypeptide is Orotate phosphoribosyltransferase (Chromohalobacter salexigens (strain ATCC BAA-138 / DSM 3043 / CIP 106854 / NCIMB 13768 / 1H11)).